The sequence spans 602 residues: Elongation factor 4 (602 aa).

The tr-type G domain maps to E7–K188. Residues D19–T24 and N135–D138 contribute to the GTP site.

This sequence belongs to the TRAFAC class translation factor GTPase superfamily. Classic translation factor GTPase family. LepA subfamily.

It is found in the cell inner membrane. The catalysed reaction is GTP + H2O = GDP + phosphate + H(+). In terms of biological role, required for accurate and efficient protein synthesis under certain stress conditions. May act as a fidelity factor of the translation reaction, by catalyzing a one-codon backward translocation of tRNAs on improperly translocated ribosomes. Back-translocation proceeds from a post-translocation (POST) complex to a pre-translocation (PRE) complex, thus giving elongation factor G a second chance to translocate the tRNAs correctly. Binds to ribosomes in a GTP-dependent manner. The chain is Elongation factor 4 from Chlamydia trachomatis serovar D (strain ATCC VR-885 / DSM 19411 / UW-3/Cx).